A 443-amino-acid polypeptide reads, in one-letter code: C4-dicarboxylate transport protein (443 aa).

Transmembrane regions (helical) follow at residues 17-37 (PFYSHLYVQVLAAIAAGILLG), 57-77 (LVKMIIAPVIFLTVATGIAGM), 92-112 (LYFLTFSTLALVIGMVVANVV), 139-159 (EQSIVGFLTNIIPTTIVGAFA), 161-181 (GDILQVLFFSVLFGIALAMVG), 201-221 (LVAILMKAAPIGAFGAMAFTI), 234-254 (MLIGTFYLTSLLFVLVVLGAV), 320-340 (IYMTLAALFIAQATGINLSWG), and 368-388 (AATLSVVPSVPVAGMALILGI).

Belongs to the dicarboxylate/amino acid:cation symporter (DAACS) (TC 2.A.23) family.

It is found in the cell inner membrane. In terms of biological role, responsible for the transport of dicarboxylates such as succinate, fumarate, and malate from the periplasm across the membrane. The sequence is that of C4-dicarboxylate transport protein from Rhizobium leguminosarum bv. trifolii (strain WSM2304).